A 145-amino-acid polypeptide reads, in one-letter code: Putative pre-16S rRNA nuclease (145 aa).

It belongs to the YqgF nuclease family.

The protein localises to the cytoplasm. Functionally, could be a nuclease involved in processing of the 5'-end of pre-16S rRNA. The protein is Putative pre-16S rRNA nuclease of Pseudomonas fluorescens (strain SBW25).